Here is a 203-residue protein sequence, read N- to C-terminus: Peptidyl-prolyl cis-trans isomerase FKBP11 (203 aa).

Positions 1–29 are cleaved as a signal peptide; that stretch reads MTLRPSLLPLRLLLLLLLLLRGAVCQAEA. A PPIase FKBP-type domain is found at 59–146; it reads GDTLHIHYSG…HFDVELIALI (88 aa). The chain crosses the membrane as a helical span at residues 158–178; that stretch reads ILPLVGMAMVPALLGLIGYHL.

This sequence belongs to the FKBP-type PPIase family. As to quaternary structure, interacts with IFITM5.

It localises to the membrane. It carries out the reaction [protein]-peptidylproline (omega=180) = [protein]-peptidylproline (omega=0). PPIases accelerate the folding of proteins during protein synthesis. The protein is Peptidyl-prolyl cis-trans isomerase FKBP11 (FKBP11) of Bos taurus (Bovine).